Consider the following 218-residue polypeptide: Recombination protein RecR (218 aa).

A C4-type zinc finger spans residues 56 to 71 (CRICCNISRDEVCRIC). Positions 79-195 (GLICVVEEPK…VVSRLASGMP (117 aa)) constitute a Toprim domain.

This sequence belongs to the RecR family.

Its function is as follows. May play a role in DNA repair. It seems to be involved in an RecBC-independent recombinational process of DNA repair. It may act with RecF and RecO. This Corynebacterium efficiens (strain DSM 44549 / YS-314 / AJ 12310 / JCM 11189 / NBRC 100395) protein is Recombination protein RecR.